A 578-amino-acid chain; its full sequence is A-type ATP synthase subunit A (578 aa).

An ATP-binding site is contributed by 228–235 (GPFGSGKT).

It belongs to the ATPase alpha/beta chains family. In terms of assembly, has multiple subunits with at least A(3), B(3), C, D, E, F, H, I and proteolipid K(x).

The protein resides in the cell membrane. It carries out the reaction ATP + H2O + 4 H(+)(in) = ADP + phosphate + 5 H(+)(out). Functionally, component of the A-type ATP synthase that produces ATP from ADP in the presence of a proton gradient across the membrane. The A chain is the catalytic subunit. The protein is A-type ATP synthase subunit A of Methanococcoides burtonii (strain DSM 6242 / NBRC 107633 / OCM 468 / ACE-M).